The sequence spans 278 residues: Juvenile hormone acid O-methyltransferase (278 aa).

The protein belongs to the methyltransferase superfamily. As to expression, specifically expressed in the corpora allata (CA).

It carries out the reaction (2E,6E)-farnesoate + S-adenosyl-L-methionine = methyl (2E,6E)-farnesoate + S-adenosyl-L-homocysteine. It catalyses the reaction juvenile hormone III carboxylate + S-adenosyl-L-methionine = juvenile hormone III + S-adenosyl-L-homocysteine. O-methyltransferase that transfers a methyl group from S-adenosyl-L-methionine (SAM) to the carboxyl group of juvenile hormone acids to produce active juvenile hormones in the corpora allata, the last step during juvenile hormone biosynthesis. Also able to methylate farnesoate to methyl farnesoate. The protein is Juvenile hormone acid O-methyltransferase of Bombyx mori (Silk moth).